The chain runs to 91 residues: Dynein 8 kDa light chain, flagellar outer arm (91 aa).

Belongs to the dynein light chain family. As to quaternary structure, consists of at least 3 heavy chains (alpha, beta and gamma), 2 intermediate chains and 8 light chains.

Its subcellular location is the cytoplasm. It localises to the cytoskeleton. The protein localises to the flagellum axoneme. This is Dynein 8 kDa light chain, flagellar outer arm from Chlamydomonas reinhardtii (Chlamydomonas smithii).